The chain runs to 1201 residues: Kinesin-like protein costa (1201 aa).

A Kinesin motor domain is found at 4 to 391 (PIQVAVRIFP…LQFAFKVQCV (388 aa)). The disordered stretch occupies residues 23 to 92 (SFGPTEPKKD…NGNDSGQKDY (70 aa)). A compositionally biased stretch (basic and acidic residues) spans 28-56 (EPKKDAQAVDEGADSKDSEAQVPAAEKDN). A compositionally biased stretch (polar residues) spans 57–75 (PSISETDPNGNAEQDSAAD). 175–182 (GQRGQGKS) provides a ligand contact to ATP. Disordered stretches follow at residues 502–536 (AEEPEDVNSEAANSESPNSDNENDTDNESHRPDLD), 565–606 (HPKA…GASL), and 618–639 (ASQQPPPPIDPESVVDPLESSS). The span at 510 to 521 (SEAANSESPNSD) shows a compositional bias: low complexity. 2 positions are modified to phosphoserine: Ser-599 and Ser-605. Coiled coils occupy residues 652–821 (AATA…ELVK) and 968–1001 (TKVIDLRDSSRKLELQLVQLERERDAWEWKERVL).

The protein belongs to the TRAFAC class myosin-kinesin ATPase superfamily. Kinesin family. KIF27 subfamily. Homodimer (Potential). Binds microtubules. Interacts with ci, smo, sgg, CkIalpha and protein kinase A catalytic subunit. Interacts (via kinesin motor domain) with Ubr3. Polyubiquitinated by Ubr3, which leads to proteasomal degradation.

The protein localises to the cytoplasm. Its subcellular location is the cytoskeleton. Regulates cubitus interruptus (ci) processing by recruiting multiple kinases to promote its efficient phosphorylation. Scaffolds multiple kinases and ci into proximity to promote its hyperphosphorylation, which then targets it for SCFSlimb/proteasome-mediated processing to generate its repressor form. Hh signaling inhibits ci phosphorylation by interfering with the cos-ci-kinases complex formation. Negatively regulates hh-signaling pathways during various processes, including photoreceptor differentiation. May negatively regulate a hh-signaling pathway which functions in the intestinal immune response to bacterial uracil by activating the Duox-dependent production of reactive oxygen species (ROS). The sequence is that of Kinesin-like protein costa (cos) from Drosophila melanogaster (Fruit fly).